A 378-amino-acid polypeptide reads, in one-letter code: UPF0754 membrane protein BT9727_0767 (378 aa).

The next 2 helical transmembrane spans lie at 1-21 (MNIWLSMLTTTGLGAIIGGFT) and 357-377 (YLGALLGGMIGIVQGLLLLFL).

The protein belongs to the UPF0754 family.

The protein resides in the cell membrane. The chain is UPF0754 membrane protein BT9727_0767 from Bacillus thuringiensis subsp. konkukian (strain 97-27).